A 988-amino-acid polypeptide reads, in one-letter code: uncharacterized protein (988 aa).

A signal peptide spans 1–17 (MIRLVFLFLLVVLSVEL). A disordered region spans residues 111 to 176 (YQNPSTFPST…SKLNQKSSKS (66 aa)). Residues 114–140 (PSTFPSTTTASTTTSTTTMPPTYQTTT) show a composition bias toward low complexity. N-linked (GlcNAc...) asparagine glycosylation is found at asparagine 247, asparagine 389, asparagine 529, and asparagine 601. A helical transmembrane segment spans residues 690 to 710 (IMIFTIFSVLSALTCLMCMYL). N-linked (GlcNAc...) asparagine glycosylation occurs at asparagine 720. Transmembrane regions (helical) follow at residues 721-741 (LTAVTFLGLAFLSISAPAFII), 753-773 (LLFPIAISITIAPVFVKTVLI), 784-804 (VLIAFCIVLIQTVISTEWLLL), 832-852 (MILLSCSLIALLSLLSFIFAL), 864-884 (LMISILAILFETALYVSLPLI), and 891-911 (TVMATTILIFAFVALLLSHTG). Residues 966 to 988 (RSEDTLRRNTSLYGTEGYELPTP) form a disordered region. Asparagine 974 carries an N-linked (GlcNAc...) asparagine glycan.

It localises to the membrane. This is an uncharacterized protein from Caenorhabditis elegans.